A 425-amino-acid chain; its full sequence is AP-3 complex subunit mu (425 aa).

The region spanning 175–423 (TNEFFIHVLE…TIIAQNVSFR (249 aa)) is the MHD domain.

It belongs to the adaptor complexes medium subunit family.

Its subcellular location is the cytoplasm. The protein resides in the cytoskeleton. It localises to the microtubule organizing center. It is found in the spindle pole body. The protein localises to the membrane. Its subcellular location is the golgi apparatus. The protein resides in the cytoplasmic vesicle membrane. Part of the AP-3 complex, an adaptor-related complex which is not clathrin-associated. The complex is associated with the Golgi region as well as more peripheral structures. It facilitates the budding of vesicles from the Golgi membrane and may be directly involved in trafficking to the vacuole. The protein is AP-3 complex subunit mu (apm3) of Schizosaccharomyces pombe (strain 972 / ATCC 24843) (Fission yeast).